A 366-amino-acid polypeptide reads, in one-letter code: tRNA 2-selenouridine synthase (366 aa).

The 125-residue stretch at 12 to 136 folds into the Rhodanese domain; the sequence is FLSGTPMMDV…MRGFLIDVIE (125 aa). C95 acts as the S-selanylcysteine intermediate in catalysis.

This sequence belongs to the SelU family. As to quaternary structure, monomer.

The catalysed reaction is 5-methylaminomethyl-2-thiouridine(34) in tRNA + selenophosphate + (2E)-geranyl diphosphate + H2O + H(+) = 5-methylaminomethyl-2-selenouridine(34) in tRNA + (2E)-thiogeraniol + phosphate + diphosphate. It carries out the reaction 5-methylaminomethyl-2-thiouridine(34) in tRNA + (2E)-geranyl diphosphate = 5-methylaminomethyl-S-(2E)-geranyl-thiouridine(34) in tRNA + diphosphate. It catalyses the reaction 5-methylaminomethyl-S-(2E)-geranyl-thiouridine(34) in tRNA + selenophosphate + H(+) = 5-methylaminomethyl-2-(Se-phospho)selenouridine(34) in tRNA + (2E)-thiogeraniol. The enzyme catalyses 5-methylaminomethyl-2-(Se-phospho)selenouridine(34) in tRNA + H2O = 5-methylaminomethyl-2-selenouridine(34) in tRNA + phosphate. Involved in the post-transcriptional modification of the uridine at the wobble position (U34) of tRNA(Lys), tRNA(Glu) and tRNA(Gln). Catalyzes the conversion of 2-thiouridine (S2U-RNA) to 2-selenouridine (Se2U-RNA). Acts in a two-step process involving geranylation of 2-thiouridine (S2U) to S-geranyl-2-thiouridine (geS2U) and subsequent selenation of the latter derivative to 2-selenouridine (Se2U) in the tRNA chain. The polypeptide is tRNA 2-selenouridine synthase (Cupriavidus pinatubonensis (strain JMP 134 / LMG 1197) (Cupriavidus necator (strain JMP 134))).